Reading from the N-terminus, the 517-residue chain is UDP-N-acetylmuramyl-tripeptide synthetase (517 aa).

Position 48 (Thr48) interacts with UDP-N-acetyl-alpha-D-muramoyl-L-alanyl-D-glutamate. Residue Gly125–Thr131 coordinates ATP. Residues Thr169–Thr170, Ser196, and Arg204 each bind UDP-N-acetyl-alpha-D-muramoyl-L-alanyl-D-glutamate. Lys238 is modified (N6-carboxylysine).

This sequence belongs to the MurCDEF family. MurE subfamily. Post-translationally, carboxylation is probably crucial for Mg(2+) binding and, consequently, for the gamma-phosphate positioning of ATP.

Its subcellular location is the cytoplasm. Its pathway is cell wall biogenesis; peptidoglycan biosynthesis. Catalyzes the addition of an amino acid to the nucleotide precursor UDP-N-acetylmuramoyl-L-alanyl-D-glutamate (UMAG) in the biosynthesis of bacterial cell-wall peptidoglycan. The chain is UDP-N-acetylmuramyl-tripeptide synthetase from Bifidobacterium longum (strain NCC 2705).